Reading from the N-terminus, the 491-residue chain is MSQAGVKTKQAGKIVQIVGPVMDVAFQPGSMPNIYNALIVKGRNGAGQEVSVVCEVQQLLGDGLVRAVSMSATDGLMRGMEVTDTGRALSVPVGPTTLGRIFNVLGEPVDNMGPVGNEKTLPIHREAPAFVDLDTKLSIFETGIKVVDLLAPYRRGGKIGLFGGAGVGKTVLIMELINNIAKAHGGVSVFGGVGERTREGNDLYMEMCESKVINKADVKSSKVALVYGQMNEPPGARMRVGLTALTMAEYFRDVNNQDVLLFIDNIFRFVQAGSEVSALLGRMPSAVGYQPTLATEMGGLQERITSTKDGSITSIQAVYVPADDLTDPAPATTFAHLDATTVLSRNLAAKGIYPAVDPLDSTSTMLQPWILGDDHYGTAQRVKQTLQRYKELQDIIAILGLDELSEEDRMIVARARKIERFLSQPFFVAEVFTGAPGKYVPLAESIQGFKLILSGELDSLPESAFYLVGNIEEAIAKAASIQAAAAAAAAA.

Position 163–170 (163–170) interacts with ATP; that stretch reads GGAGVGKT.

Belongs to the ATPase alpha/beta chains family. As to quaternary structure, F-type ATPases have 2 components, CF(1) - the catalytic core - and CF(0) - the membrane proton channel. CF(1) has five subunits: alpha(3), beta(3), gamma(1), delta(1), epsilon(1). CF(0) has four main subunits: a(1), b(1), b'(1) and c(9-12).

It localises to the plastid. Its subcellular location is the chloroplast thylakoid membrane. It catalyses the reaction ATP + H2O + 4 H(+)(in) = ADP + phosphate + 5 H(+)(out). In terms of biological role, produces ATP from ADP in the presence of a proton gradient across the membrane. The catalytic sites are hosted primarily by the beta subunits. In Nephroselmis olivacea (Green alga), this protein is ATP synthase subunit beta, chloroplastic.